The sequence spans 342 residues: Phosphate acyltransferase (342 aa).

Belongs to the PlsX family. Homodimer. Probably interacts with PlsY.

It is found in the cytoplasm. The catalysed reaction is a fatty acyl-[ACP] + phosphate = an acyl phosphate + holo-[ACP]. It functions in the pathway lipid metabolism; phospholipid metabolism. Catalyzes the reversible formation of acyl-phosphate (acyl-PO(4)) from acyl-[acyl-carrier-protein] (acyl-ACP). This enzyme utilizes acyl-ACP as fatty acyl donor, but not acyl-CoA. The sequence is that of Phosphate acyltransferase from Shewanella sediminis (strain HAW-EB3).